The chain runs to 177 residues: Ribonuclease clavin (177 aa).

The N-terminal stretch at M1 to R27 is a signal peptide. Intrachain disulfides connect C33-C175 and C103-C159. H77 is a catalytic residue. A disordered region spans residues W98–N117. The segment covering D102–N117 has biased composition (basic and acidic residues). E123 acts as the Proton acceptor in catalysis. H164 serves as the catalytic Proton donor.

Belongs to the ribonuclease U2 family.

The protein localises to the secreted. Clavin has the same substrate specificity as alpha-sarcin. It is specific for purines in both single- and double-stranded RNA. Its toxic action on eukaryotic cells is the result of cleavage of a single phosphodiester bond in the 60S subunit of ribosomes. The protein is Ribonuclease clavin (cla) of Aspergillus clavatus (strain ATCC 1007 / CBS 513.65 / DSM 816 / NCTC 3887 / NRRL 1 / QM 1276 / 107).